The chain runs to 533 residues: Malate synthase A (533 aa).

The Proton acceptor role is filled by Arg166. Residue Asp447 is the Proton donor of the active site.

Belongs to the malate synthase family.

Its subcellular location is the cytoplasm. The enzyme catalyses glyoxylate + acetyl-CoA + H2O = (S)-malate + CoA + H(+). It participates in carbohydrate metabolism; glyoxylate cycle; (S)-malate from isocitrate: step 2/2. The sequence is that of Malate synthase A (aceB) from Escherichia coli (strain K12).